Consider the following 706-residue polypeptide: Maternal embryonic leucine zipper kinase (706 aa).

In terms of domain architecture, Protein kinase spans 11 to 265 (YAVHDELGSG…VKKLLEHDWL (255 aa)). ATP-binding positions include 17-25 (LGSGGFGKV) and Lys-40. Asp-132 functions as the Proton acceptor in the catalytic mechanism. Disordered regions lie at residues 366–386 (LDKSGLEDDDSDPSSISSSSD), 433–493 (FTGR…SRGP), and 506–555 (SVYT…IGSA). Polar residues-rich tracts occupy residues 447-461 (SVRSSDSASLGSAAT) and 506-515 (SVYTTPNTRP). The KA1 domain occupies 656–705 (QETVHGWMTVELEIVRLQMFDKVGIRRKRLKGDAFMYKKVCEKILQMAKI).

It belongs to the protein kinase superfamily. CAMK Ser/Thr protein kinase family. SNF1 subfamily. May be phosphorylated at Thr-169 by par-4 and/or autophosphorylated which likely results in its activation. Phosphorylation is not required for co-localization with the centrosome.

Its subcellular location is the cytoplasm. It localises to the cytoskeleton. It is found in the microtubule organizing center. The protein resides in the centrosome. It carries out the reaction L-seryl-[protein] + ATP = O-phospho-L-seryl-[protein] + ADP + H(+). It catalyses the reaction L-threonyl-[protein] + ATP = O-phospho-L-threonyl-[protein] + ADP + H(+). Serine/threonine-protein kinase involved in cell autonomous neuroblast asymmetric divisions that generate one precursor cell and one apoptotic cell by controlling spindle positioning, myosin distribution and the segregation of cell fate determinants. Plays a role in neural fate specification in several dopaminergic linages, acting in concert with ham-1. Involved in phosphorylation of multiple proteins associated with key developmental processes, including the cell cycle, apoptosis, endocytosis, and asymmetric cell division. Promotes cell shedding during embryogenesis, probably through the endocytosis-mediated removal of cell adhesion molecules such as hmp-1 from the cell surface. May act downstream of par-4/strd-1/mop-25 to regulate cell shedding. This Caenorhabditis elegans protein is Maternal embryonic leucine zipper kinase.